The chain runs to 245 residues: Thiopurine S-methyltransferase (245 aa).

29–40 is an S-adenosyl-L-methionine binding site; the sequence is WQDKWVSHKIGF. F40 provides a ligand contact to substrate. N6-acetyllysine is present on K58. Residues L69, E90, 134-135, and R152 contribute to the S-adenosyl-L-methionine site; that span reads SI.

This sequence belongs to the class I-like SAM-binding methyltransferase superfamily. TPMT family. Monomer.

The protein resides in the cytoplasm. The enzyme catalyses S-adenosyl-L-methionine + a thiopurine = S-adenosyl-L-homocysteine + a thiopurine S-methylether.. This Oryctolagus cuniculus (Rabbit) protein is Thiopurine S-methyltransferase (TPMT).